A 242-amino-acid chain; its full sequence is Large ribosomal subunit protein uL2 (242 aa).

The tract at residues 201-242 (VDHPFGGGRHQHTGKPTTVSRKKVPPGRKVGHISARRTGVRK) is disordered. The segment covering 220–242 (SRKKVPPGRKVGHISARRTGVRK) has biased composition (basic residues).

This sequence belongs to the universal ribosomal protein uL2 family. As to quaternary structure, part of the 50S ribosomal subunit. Forms a bridge to the 30S subunit in the 70S ribosome.

In terms of biological role, one of the primary rRNA binding proteins. Required for association of the 30S and 50S subunits to form the 70S ribosome, for tRNA binding and peptide bond formation. It has been suggested to have peptidyltransferase activity; this is somewhat controversial. Makes several contacts with the 16S rRNA in the 70S ribosome. In Methanocaldococcus jannaschii (strain ATCC 43067 / DSM 2661 / JAL-1 / JCM 10045 / NBRC 100440) (Methanococcus jannaschii), this protein is Large ribosomal subunit protein uL2.